Consider the following 489-residue polypeptide: MQAPVLMVVGTASSVGKSTLVTALCRLAYRRGLRVAPFKAQNMSNNAAVTADGKEIARSTAVQAAAAGIAPTVAMNPILIKPEGQRRSQIIVEGRPWQSLTATDFWQRKAQLWSVVTRNLDHLRATYDLVIAEGAGSPVELNLKPGDIVNMRVARYAQAQTILVGDIDRGGIFAQLLGTLMLLEPEERQLITGCIVNRFRGDPSLFADGVTILEERSGLPVLGVIPWLDDLGLPEEDAVALEQPPVAPAHGLIIAVIRLPTIANFDDFDPLAREPGVVVRYIDHPLELTGAAAVILPGVKHTLAARHWLHERGFDNALREFTGAIVGICGGYQLLGERISDPLAVEGSGGEAAGLGLLPIETIFTTAKQTTQTIACAQVPWAGNEPLQGYEIHMGQSYRRGEAPAFLRIIQRGNTPTSADDGCISSDGRVWGCYLHGIFANDTFRRGWLRRLGWQPPTTPVARADPFDRLADHVAAALGPAVLDRLMRR.

The GATase cobBQ-type domain occupies 251–444 (GLIIAVIRLP…LHGIFANDTF (194 aa)). Residue cysteine 329 is the Nucleophile of the active site. Histidine 436 is a catalytic residue.

The protein belongs to the CobB/CobQ family. CobQ subfamily.

It participates in cofactor biosynthesis; adenosylcobalamin biosynthesis. In terms of biological role, catalyzes amidations at positions B, D, E, and G on adenosylcobyrinic A,C-diamide. NH(2) groups are provided by glutamine, and one molecule of ATP is hydrogenolyzed for each amidation. This Chloroflexus aurantiacus (strain ATCC 29366 / DSM 635 / J-10-fl) protein is Cobyric acid synthase.